A 216-amino-acid chain; its full sequence is ATP-dependent Clp protease proteolytic subunit (216 aa).

The Nucleophile role is filled by Ser-120. His-145 is a catalytic residue.

The protein belongs to the peptidase S14 family. In terms of assembly, fourteen ClpP subunits assemble into 2 heptameric rings which stack back to back to give a disk-like structure with a central cavity, resembling the structure of eukaryotic proteasomes.

It is found in the cytoplasm. It catalyses the reaction Hydrolysis of proteins to small peptides in the presence of ATP and magnesium. alpha-casein is the usual test substrate. In the absence of ATP, only oligopeptides shorter than five residues are hydrolyzed (such as succinyl-Leu-Tyr-|-NHMec, and Leu-Tyr-Leu-|-Tyr-Trp, in which cleavage of the -Tyr-|-Leu- and -Tyr-|-Trp bonds also occurs).. Cleaves peptides in various proteins in a process that requires ATP hydrolysis. Has a chymotrypsin-like activity. Plays a major role in the degradation of misfolded proteins. The protein is ATP-dependent Clp protease proteolytic subunit of Cupriavidus pinatubonensis (strain JMP 134 / LMG 1197) (Cupriavidus necator (strain JMP 134)).